We begin with the raw amino-acid sequence, 230 residues long: Uracil-DNA glycosylase (230 aa).

Residue D71 is the Proton acceptor of the active site.

This sequence belongs to the uracil-DNA glycosylase (UDG) superfamily. UNG family.

Its subcellular location is the cytoplasm. The enzyme catalyses Hydrolyzes single-stranded DNA or mismatched double-stranded DNA and polynucleotides, releasing free uracil.. In terms of biological role, excises uracil residues from the DNA which can arise as a result of misincorporation of dUMP residues by DNA polymerase or due to deamination of cytosine. In Nocardioides sp. (strain ATCC BAA-499 / JS614), this protein is Uracil-DNA glycosylase.